The sequence spans 116 residues: MRERTSRRIMQRFTIHDLAAIIDARAASGGDASYTRKLLDKGPAHCARKLGEEAVETIIAAVEKDRHHLIAEGADLMFHFLVLLKASGVTLQDVEAVLAQRTAISGLEEKAARNRD.

The protein belongs to the PRA-PH family.

It is found in the cytoplasm. The catalysed reaction is 1-(5-phospho-beta-D-ribosyl)-ATP + H2O = 1-(5-phospho-beta-D-ribosyl)-5'-AMP + diphosphate + H(+). Its pathway is amino-acid biosynthesis; L-histidine biosynthesis; L-histidine from 5-phospho-alpha-D-ribose 1-diphosphate: step 2/9. The protein is Phosphoribosyl-ATP pyrophosphatase of Nitrobacter winogradskyi (strain ATCC 25391 / DSM 10237 / CIP 104748 / NCIMB 11846 / Nb-255).